The primary structure comprises 329 residues: Phenylalanine--tRNA ligase alpha subunit (329 aa).

Residue E254 coordinates Mg(2+).

Belongs to the class-II aminoacyl-tRNA synthetase family. Phe-tRNA synthetase alpha subunit type 1 subfamily. As to quaternary structure, tetramer of two alpha and two beta subunits. The cofactor is Mg(2+).

Its subcellular location is the cytoplasm. The enzyme catalyses tRNA(Phe) + L-phenylalanine + ATP = L-phenylalanyl-tRNA(Phe) + AMP + diphosphate + H(+). The sequence is that of Phenylalanine--tRNA ligase alpha subunit from Haemophilus influenzae (strain 86-028NP).